Here is a 444-residue protein sequence, read N- to C-terminus: Trimethylamine monooxygenase (444 aa).

The FAD site is built by cysteine 12, glutamate 37, glutamine 39, leucine 45, and tryptophan 46. NADP(+) is bound by residues tryptophan 70 and asparagine 72. Residues asparagine 72 and valine 125 each coordinate FAD. Tyrosine 170, serine 202, serine 203, serine 205, arginine 226, histidine 227, and asparagine 288 together coordinate NADP(+). FAD-binding residues include glutamine 315 and threonine 318. An NADP(+)-binding site is contributed by arginine 409.

It belongs to the FMO family. Homodimer. FAD is required as a cofactor.

It catalyses the reaction trimethylamine + NADPH + O2 = trimethylamine N-oxide + NADP(+) + H2O. Its function is as follows. Catalyzes the oxidation of trimethylamine (TMA) to produce trimethylamine N-oxide (TMAO). In vitro, has a broad substrate specificity, oxidizing many nitrogen- and sulfur-containing compounds, including dimethylamine (DMA), dimethylsulfide (DMS), dimethylsulfoxide (DMSO) and methimazole. TMA shows the highest affinity. This is Trimethylamine monooxygenase from Pelagibacter sp. (strain HTCC7211).